The primary structure comprises 288 residues: Thymidylate synthase (288 aa).

Residues Arg21 and 150–151 (RR) each bind dUMP. Cys170 acts as the Nucleophile in catalysis. DUMP contacts are provided by residues 191–194 (RSGD), Asn202, and 232–234 (HIY). Residue Asp194 coordinates (6R)-5,10-methylene-5,6,7,8-tetrahydrofolate. (6R)-5,10-methylene-5,6,7,8-tetrahydrofolate is bound at residue Ala287.

This sequence belongs to the thymidylate synthase family. Bacterial-type ThyA subfamily. As to quaternary structure, homodimer.

Its subcellular location is the cytoplasm. The enzyme catalyses dUMP + (6R)-5,10-methylene-5,6,7,8-tetrahydrofolate = 7,8-dihydrofolate + dTMP. It participates in pyrimidine metabolism; dTTP biosynthesis. Functionally, catalyzes the reductive methylation of 2'-deoxyuridine-5'-monophosphate (dUMP) to 2'-deoxythymidine-5'-monophosphate (dTMP) while utilizing 5,10-methylenetetrahydrofolate (mTHF) as the methyl donor and reductant in the reaction, yielding dihydrofolate (DHF) as a by-product. This enzymatic reaction provides an intracellular de novo source of dTMP, an essential precursor for DNA biosynthesis. The sequence is that of Thymidylate synthase from Mesoplasma florum (strain ATCC 33453 / NBRC 100688 / NCTC 11704 / L1) (Acholeplasma florum).